A 160-amino-acid chain; its full sequence is Small ribosomal subunit protein uS9 (160 aa).

Belongs to the universal ribosomal protein uS9 family.

This is Small ribosomal subunit protein uS9 from Rhodopseudomonas palustris (strain ATCC BAA-98 / CGA009).